The primary structure comprises 118 residues: Holo-[acyl-carrier-protein] synthase (118 aa).

Mg(2+)-binding residues include Asp8 and Glu57.

Belongs to the P-Pant transferase superfamily. AcpS family. The cofactor is Mg(2+).

The protein resides in the cytoplasm. The catalysed reaction is apo-[ACP] + CoA = holo-[ACP] + adenosine 3',5'-bisphosphate + H(+). Functionally, transfers the 4'-phosphopantetheine moiety from coenzyme A to a Ser of acyl-carrier-protein. This Pediococcus pentosaceus (strain ATCC 25745 / CCUG 21536 / LMG 10740 / 183-1w) protein is Holo-[acyl-carrier-protein] synthase.